The sequence spans 236 residues: Leucyl/phenylalanyl-tRNA--protein transferase (236 aa).

Belongs to the L/F-transferase family.

Its subcellular location is the cytoplasm. The catalysed reaction is N-terminal L-lysyl-[protein] + L-leucyl-tRNA(Leu) = N-terminal L-leucyl-L-lysyl-[protein] + tRNA(Leu) + H(+). The enzyme catalyses N-terminal L-arginyl-[protein] + L-leucyl-tRNA(Leu) = N-terminal L-leucyl-L-arginyl-[protein] + tRNA(Leu) + H(+). It carries out the reaction L-phenylalanyl-tRNA(Phe) + an N-terminal L-alpha-aminoacyl-[protein] = an N-terminal L-phenylalanyl-L-alpha-aminoacyl-[protein] + tRNA(Phe). Functions in the N-end rule pathway of protein degradation where it conjugates Leu, Phe and, less efficiently, Met from aminoacyl-tRNAs to the N-termini of proteins containing an N-terminal arginine or lysine. The polypeptide is Leucyl/phenylalanyl-tRNA--protein transferase (Vibrio parahaemolyticus serotype O3:K6 (strain RIMD 2210633)).